Reading from the N-terminus, the 367-residue chain is Glycolate oxidase 1 (367 aa).

N-acetylmethionine is present on methionine 1. Tyrosine 24 contacts glyoxylate. FMN is bound by residues 77 to 79 (PTA), serine 106, 127 to 129 (QLY), and threonine 155. Tyrosine 129 is a glyoxylate binding site. Position 164 (arginine 164) interacts with glyoxylate. The FMN site is built by lysine 230 and serine 252. Glyoxylate is bound by residues histidine 254 and arginine 257. Histidine 254 acts as the Proton acceptor in catalysis. FMN is bound by residues 285 to 289 (DGGVR) and 308 to 309 (GR).

This sequence belongs to the FMN-dependent alpha-hydroxy acid dehydrogenase family. Homotetramer. FMN is required as a cofactor.

It is found in the peroxisome. The catalysed reaction is glycolate + O2 = glyoxylate + H2O2. It participates in photosynthesis; photorespiration; glycine from 2-phosphoglycolate: step 2/3. Functionally, catalyzes the oxidation of glycolate to glyoxylate, with a reduction of O2 to H2O2. Is a key enzyme in photorespiration in green plants. The chain is Glycolate oxidase 1 (GLO1) from Arabidopsis thaliana (Mouse-ear cress).